Here is a 283-residue protein sequence, read N- to C-terminus: Acyl-coenzyme A diphosphatase FITM2 (283 aa).

Positions 1–11 (MSTRRSSTRAD) are enriched in low complexity. The segment at 1 to 21 (MSTRRSSTRADSTTKRPASPN) is disordered. At 1–39 (MSTRRSSTRADSTTKRPASPNSTPNAALGIFVAIARQIL) the chain is on the cytoplasmic side. The chain crosses the membrane as a helical span at residues 40–60 (FIDARKVALFYLAFVTVLSFI). The Lumenal segment spans residues 61–81 (ESRIELDSTYYLVQKHSVLNQ). The helical transmembrane segment at 82–102 (YGVKMGWFWTLVIVGPFIWFS) threads the bilayer. Over 103–120 (SKAHNRRDRDQPIVDVCR) the chain is Cytoplasmic. Residues 121–141 (LGVGTACWYFSVQFFHKVLAL) traverse the membrane as a helical segment. Topologically, residues 142-168 (TSMCDKGRTLTRAQCSEKEGVWTPGYD) are lumenal. Residues 169–189 (ISGHCFLMIYSILIITEEAIA) form a helical membrane-spanning segment. The active site involves His-172. Residues 190–219 (YRHYQQVTDAVHQMDGDREEHDRLTRCIQY) lie on the Cytoplasmic side of the membrane. 2 helical membrane-spanning segments follow: residues 220-240 (FFVAMLFLHAFWFKQIIISVL) and 241-261 (YYHIFIEEILGAVAAVVCWFV). His-243 is a catalytic residue. Residues 262 to 283 (TYRMLYPAGFLASPIRRTVGRK) are Cytoplasmic-facing.

It belongs to the FIT family. FIT2 subfamily.

The protein localises to the endoplasmic reticulum membrane. The catalysed reaction is an acyl-CoA + H2O = an acyl-4'-phosphopantetheine + adenosine 3',5'-bisphosphate + 2 H(+). Functionally, fatty acyl-coenzyme A (CoA) diphosphatase that hydrolyzes fatty acyl-CoA to yield acyl-4'-phosphopantetheine and adenosine 3',5'-bisphosphate. Preferentially hydrolyzes unsaturated long-chain acyl-CoA substrates in the endoplasmic reticulum (ER) lumen. This catalytic activity is required for maintaining ER structure and for lipid droplets (LDs) biogenesis, which are lipid storage organelles involved in maintaining lipid and energy homeostasis. May directly bind to diacylglycerol (DAGs) and triacylglycerol, which is also important for LD biogenesis. May support directional budding of nacent LDs from the ER into the cytosol by reducing DAG levels at sites of LD formation. May play a role in the regulation of cell morphology, ER morphology and cytoskeletal organization. The polypeptide is Acyl-coenzyme A diphosphatase FITM2 (Caenorhabditis elegans).